Consider the following 1921-residue polypeptide: Disks large homolog 5 (1921 aa).

Residues Met-1–Gly-90 form the CARD domain. Residues Glu-116–Asn-143 are disordered. Positions Glu-139 to Ala-601 form a coiled coil. A phosphoserine mark is found at Ser-264 and Ser-295. 2 consecutive PDZ domains span residues Val-620 to Lys-710 and Val-705 to Phe-796. Residues Glu-857–Asp-898 are disordered. Positions Ser-873 to Asp-898 are enriched in polar residues. Residue Ser-900 is modified to Phosphoserine. Residues Glu-930–Pro-1121 form a disordered region. Position 984 is a phosphothreonine (Thr-984). Ser-1000 carries the phosphoserine modification. Thr-1011 carries the phosphothreonine modification. Positions Arg-1017–Thr-1030 are enriched in basic and acidic residues. A Phosphoserine modification is found at Ser-1021. Residues Thr-1045–Met-1055 show a composition bias toward pro residues. Thr-1183 bears the Phosphothreonine mark. 3 disordered regions span residues Val-1204 to His-1227, Tyr-1243 to Asn-1266, and Pro-1280 to Pro-1343. Ser-1209 carries the phosphoserine modification. Positions Gly-1217–His-1227 are enriched in polar residues. The segment covering Ser-1252–Asn-1266 has biased composition (low complexity). Ser-1263 bears the Phosphoserine mark. Polar residues predominate over residues Gly-1292–Thr-1324. Ser-1334 carries the phosphoserine modification. Residues His-1350–Pro-1429 enclose the PDZ 3 domain. Composition is skewed to polar residues over residues Leu-1434–His-1443, Pro-1450–Gly-1460, and Ala-1483–Asp-1495. Residues Leu-1434–Pro-1501 are disordered. The PDZ 4 domain occupies Arg-1504 to His-1585. Positions Gly-1596 to Phe-1664 constitute an SH3 domain. At Ser-1669 the chain carries Phosphoserine. The Guanylate kinase-like domain occupies Asp-1724–Ser-1907.

It belongs to the MAGUK family. As to quaternary structure, interacts with MPP1. Interacts with CTNNB1 and with the third SH3 domain of SORBS3 to form a ternary complex. Interacts (via coiled-coil domain) with MARK3. Interacts (via PDZ domain 3) with STK3/MST2 and STK4/MST1. Interacts with SCRIB. Interacts with CTNB1. Interacts with SMO and (via PDZ4 or guanylate kinase-like domain) with KIF7. Brain (at protein level).

The protein localises to the cell junction. The protein resides in the cell membrane. Its subcellular location is the postsynaptic density. It is found in the cytoplasm. It localises to the cytoskeleton. The protein localises to the cilium basal body. Functionally, acts as a regulator of the Hippo signaling pathway. Negatively regulates the Hippo signaling pathway by mediating the interaction of MARK3 with STK3/4, bringing them together to promote MARK3-dependent hyperphosphorylation and inactivation of STK3 kinase activity toward LATS1. Positively regulates the Hippo signaling by mediating the interaction of SCRIB with STK4/MST1 and LATS1 which is important for the activation of the Hippo signaling pathway. Involved in regulating cell proliferation, maintenance of epithelial polarity, epithelial-mesenchymal transition (EMT), cell migration and invasion. Plays an important role in dendritic spine formation and synaptogenesis in cortical neurons; regulates synaptogenesis by enhancing the cell surface localization of N-cadherin. Acts as a positive regulator of hedgehog (Hh) signaling pathway. Plays a critical role in the early point of the SMO activity cycle by interacting with SMO at the ciliary base to induce the accumulation of KIF7 and GLI2 at the ciliary tip for GLI2 activation. In Mus musculus (Mouse), this protein is Disks large homolog 5 (Dlg5).